The chain runs to 881 residues: EEF1AKMT4-ECE2 readthrough transcript protein (881 aa).

The segment at 1–160 (MASPRTPVSP…VHTVDQVLSE (160 aa)) is methyltransferase-like region. Residues 1 to 178 (MASPRTPVSP…QLFGSHTQLE (178 aa)) are Cytoplasmic-facing. Positions 26 and 30 each coordinate S-adenosyl-L-methionine. Y39 carries the post-translational modification Phosphotyrosine. Residues W41, G66, 88–89 (DY), 113–114 (DV), and K130 contribute to the S-adenosyl-L-methionine site. Phosphoserine is present on H174. The helical; Signal-anchor for type II membrane protein transmembrane segment at 179–199 (LVLAGLILVLAALLLGCLVAL) threads the bilayer. At 200–881 (WVHRDPAHST…MNPGQLCEVW (682 aa)) the chain is on the lumenal side. One can recognise a Peptidase M13 domain in the interval 209–881 (TCVTEACIRV…MNPGQLCEVW (673 aa)). 5 disulfides stabilise this stretch: C210–C215, C233–C866, C241–C826, C297–C546, and C755–C878. N-linked (GlcNAc...) asparagine glycans are attached at residues N277, N281, N322, N382, N427, N494, and N650. Residue H718 participates in Zn(2+) binding. Residue E719 is part of the active site. Zn(2+) is bound at residue H722. 2 N-linked (GlcNAc...) asparagine glycosylation sites follow: N743 and N751. Position 778 (E778) interacts with Zn(2+). D782 functions as the Proton donor in the catalytic mechanism.

It in the N-terminal section; belongs to the methyltransferase superfamily. The protein in the C-terminal section; belongs to the peptidase M13 family. Zn(2+) is required as a cofactor. Expressed at high levels in central nervous system. Expressed in adrenal glands, ovary and uterus, and at low levels in heart.

The protein localises to the golgi apparatus membrane. Its subcellular location is the cytoplasmic vesicle. It localises to the secretory vesicle membrane. The enzyme catalyses Hydrolysis of the 21-Trp-|-Val-22 bond in big endothelin to form endothelin 1.. Its activity is regulated as follows. Inhibited by phosphoramidon. Its function is as follows. Converts big endothelin-1 to endothelin-1. May also have methyltransferase activity. May play a role in amyloid-beta processing. This Mus musculus (Mouse) protein is EEF1AKMT4-ECE2 readthrough transcript protein.